The primary structure comprises 271 residues: Aliphatic sulfonates import ATP-binding protein SsuB (271 aa).

The 222-residue stretch at 13–234 folds into the ABC transporter domain; that stretch reads ITLESIGKRY…RKGSAKLAAL (222 aa). Residue 45 to 52 participates in ATP binding; it reads GRSGCGKS. The tract at residues 250–271 is disordered; it reads EASRQGIKASRQGTATSRRVAN. A compositionally biased stretch (polar residues) spans 260-271; that stretch reads RQGTATSRRVAN.

This sequence belongs to the ABC transporter superfamily. Aliphatic sulfonates importer (TC 3.A.1.17.2) family. In terms of assembly, the complex is composed of two ATP-binding proteins (SsuB), two transmembrane proteins (SsuC) and a solute-binding protein (SsuA).

The protein localises to the cell inner membrane. It carries out the reaction ATP + H2O + aliphatic sulfonate-[sulfonate-binding protein]Side 1 = ADP + phosphate + aliphatic sulfonateSide 2 + [sulfonate-binding protein]Side 1.. Part of the ABC transporter complex SsuABC involved in aliphatic sulfonates import. Responsible for energy coupling to the transport system. This Yersinia pestis bv. Antiqua (strain Antiqua) protein is Aliphatic sulfonates import ATP-binding protein SsuB.